A 160-amino-acid polypeptide reads, in one-letter code: uncharacterized protein (160 aa).

This is an uncharacterized protein from Human cytomegalovirus (strain AD169) (HHV-5).